Reading from the N-terminus, the 544-residue chain is CTP synthase (544 aa).

Positions 1–266 (MSTKFIFVTG…DYFVCRRFHL (266 aa)) are amidoligase domain. Ser-14 lines the CTP pocket. UTP is bound at residue Ser-14. Residues 15–20 (SLGKGI) and Asp-72 each bind ATP. Mg(2+) is bound by residues Asp-72 and Glu-140. CTP contacts are provided by residues 147 to 149 (DIE), 187 to 192 (KTKPTQ), and Lys-223. Residues 187–192 (KTKPTQ) and Lys-223 each bind UTP. Residues 291-542 (TIGMVGKYIE…VAAAHIHQKA (252 aa)) form the Glutamine amidotransferase type-1 domain. Residue Gly-352 coordinates L-glutamine. The active-site Nucleophile; for glutamine hydrolysis is the Cys-379. L-glutamine contacts are provided by residues 380–383 (LGMQ), Glu-403, and Arg-470. Catalysis depends on residues His-515 and Glu-517.

This sequence belongs to the CTP synthase family. Homotetramer.

It catalyses the reaction UTP + L-glutamine + ATP + H2O = CTP + L-glutamate + ADP + phosphate + 2 H(+). The catalysed reaction is L-glutamine + H2O = L-glutamate + NH4(+). It carries out the reaction UTP + NH4(+) + ATP = CTP + ADP + phosphate + 2 H(+). The protein operates within pyrimidine metabolism; CTP biosynthesis via de novo pathway; CTP from UDP: step 2/2. With respect to regulation, allosterically activated by GTP, when glutamine is the substrate; GTP has no effect on the reaction when ammonia is the substrate. The allosteric effector GTP functions by stabilizing the protein conformation that binds the tetrahedral intermediate(s) formed during glutamine hydrolysis. Inhibited by the product CTP, via allosteric rather than competitive inhibition. Catalyzes the ATP-dependent amination of UTP to CTP with either L-glutamine or ammonia as the source of nitrogen. Regulates intracellular CTP levels through interactions with the four ribonucleotide triphosphates. This chain is CTP synthase, found in Pseudoalteromonas translucida (strain TAC 125).